The sequence spans 371 residues: MSIRVLLFSIFTGFLLAAAGPALAQGSRIKDVASLQAGRDNQLIGYGLVVGLQSTGDSLRSSPFTDQSMRAMLQNLGISTQGGQSSAKNVAAVMVTATLPPFGSPGSRIDATVSSLGDATSLRGGTLIMTSLSGADGQIYAVAQGSVVVSGFTAQGQAATVTEGVTTSGRVPNGAIIERELPSKFKDSVNLVLQLRNPDFSTSLGMARRINNYATATYGAPIAEARDSQEVVIQKPRTADLAQLMADIENLVVETDTPAKVVINERTGTIVIGADVRVSKVAVSYGTLTVQVNETPQVIQPQPFSSGTTATQPQTDISAQKTGDKVAIVDGPDLRTLVAGLNNIGVKPDGIIAILQGIKSAGALQAELVLQ.

A signal peptide spans 1–24 (MSIRVLLFSIFTGFLLAAAGPALA). Residues 301-321 (PQPFSSGTTATQPQTDISAQK) are compositionally biased toward polar residues. The tract at residues 301–322 (PQPFSSGTTATQPQTDISAQKT) is disordered.

Belongs to the FlgI family. The basal body constitutes a major portion of the flagellar organelle and consists of four rings (L,P,S, and M) mounted on a central rod.

The protein localises to the periplasm. The protein resides in the bacterial flagellum basal body. Its function is as follows. Assembles around the rod to form the L-ring and probably protects the motor/basal body from shearing forces during rotation. In Allorhizobium ampelinum (strain ATCC BAA-846 / DSM 112012 / S4) (Agrobacterium vitis (strain S4)), this protein is Flagellar P-ring protein.